We begin with the raw amino-acid sequence, 114 residues long: Fumarate reductase subunit D (114 aa).

3 helical membrane passes run 24-44 (VSAIFFPVVILIIGLLLPFGL), 50-70 (LITFAYSWIGKLVILVLTIFP), and 92-112 (GGFIFYGLATIYTVWVLFAVI).

It belongs to the FrdD family. As to quaternary structure, part of an enzyme complex containing four subunits: a flavoprotein (FrdA), an iron-sulfur protein (FrdB), and two hydrophobic anchor proteins (FrdC and FrdD).

The protein resides in the cell inner membrane. Functionally, anchors the catalytic components of the fumarate reductase complex to the cell membrane, binds quinones. The chain is Fumarate reductase subunit D from Haemophilus influenzae (strain PittEE).